The primary structure comprises 462 residues: HEPACAM family member 2 (462 aa).

Positions 1-31 are cleaved as a signal peptide; sequence MGQDAFMEPFGDTLGVFQCKIYLLLFGACSG. Asn85, Asn129, and Asn165 each carry an N-linked (GlcNAc...) asparagine glycan. Ig-like C2-type domains lie at 149–233 and 235–331; these read PVVQ…SDII and PIIY…THFT. 2 disulfides stabilise this stretch: Cys170–Cys219 and Cys270–Cys315. An N-linked (GlcNAc...) asparagine glycan is attached at Asn320. The chain crosses the membrane as a helical span at residues 352-372; it reads LASITGISLFLIISMCLLFLW. Topologically, residues 373-462 are cytoplasmic; it reads KKYQPYKVIK…IPAQQQDHPE (90 aa).

Poly-ADP-ribosylated (PARsylated) by tankyrase TNKS during late G2 and prophase, leading to translocation to mitotic centrosomes. In terms of processing, N-glycosylated. In terms of tissue distribution, widely expressed.

The protein localises to the golgi apparatus membrane. It localises to the cytoplasm. It is found in the cytoskeleton. The protein resides in the spindle. Its subcellular location is the microtubule organizing center. The protein localises to the centrosome. It localises to the midbody. Its function is as follows. Required during prometaphase for centrosome maturation. Following poly-ADP-ribosylation (PARsylation) by TNKS, translocates from the Golgi apparatus to mitotic centrosomes and plays a key role in the formation of robust microtubules for prompt movement of chromosomes: anchors AKAP9/CG-NAP, a scaffold protein of the gamma-tubulin ring complex and promotes centrosome maturation. This is HEPACAM family member 2 (HEPACAM2) from Homo sapiens (Human).